The chain runs to 99 residues: Plastocyanin (99 aa).

A Plastocyanin-like domain is found at 1–99 (IEVLLGGGDG…AGMVGKVTVN (99 aa)). Residues His37, Cys84, His87, and Met92 each coordinate Cu cation.

This sequence belongs to the plastocyanin family. The cofactor is Cu(2+).

The protein resides in the plastid. Its subcellular location is the chloroplast thylakoid membrane. In terms of biological role, participates in electron transfer between P700 and the cytochrome b6-f complex in photosystem I. In Capsella bursa-pastoris (Shepherd's purse), this protein is Plastocyanin (PETE).